Here is a 222-residue protein sequence, read N- to C-terminus: MLCRAACSTSRKLVPALGSLGSRQKHSLPDLQYDYGALEPYINAQIMQLHHSKHHAAYVNNLNVTEEKYQEALAKGDVTAQIALQPALKFNGGGHINHTIFWTNLSPNGGGEPKGKLLDAIKRDFGSFDKFKEKLTAVSAGVQGSGWGWLGFNKDQGRLQIVACPNQDPLQGTTGLIPLLGIDVWEHAYYLQYKNVRPDYLKAIWNVINWENVSERYMACKK.

The transit peptide at 1–24 (MLCRAACSTSRKLVPALGSLGSRQ) directs the protein to the mitochondrion. A Mn(2+)-binding site is contributed by His50. Tyr58 carries the 3'-nitrotyrosine modification. An N6-acetyllysine; alternate mark is found at Lys68 and Lys75. An N6-succinyllysine; alternate mark is found at Lys68 and Lys75. Mn(2+) is bound at residue His98. Lys114 is subject to N6-acetyllysine. Residues Lys122 and Lys130 each carry the N6-acetyllysine; alternate modification. Lys122 and Lys130 each carry N6-succinyllysine; alternate. Mn(2+) is bound by residues Asp183 and His187. Residue Lys202 is modified to N6-acetyllysine.

It belongs to the iron/manganese superoxide dismutase family. Homotetramer. Requires Mn(2+) as cofactor. In terms of processing, nitrated under oxidative stress. Nitration coupled with oxidation inhibits the catalytic activity. Post-translationally, acetylation at Lys-122 decreases enzymatic activity. Deacetylated by SIRT3 upon exposure to ionizing radiations or after long fasting. Polyubiquitinated; leading to proteasomal degradation. Deubiquitinated by USP36 which increases protein stability.

It localises to the mitochondrion matrix. It catalyses the reaction 2 superoxide + 2 H(+) = H2O2 + O2. Its function is as follows. Destroys superoxide anion radicals which are normally produced within the cells and which are toxic to biological systems. In Equus caballus (Horse), this protein is Superoxide dismutase [Mn], mitochondrial (SOD2).